We begin with the raw amino-acid sequence, 256 residues long: Ubiquinone/menaquinone biosynthesis C-methyltransferase UbiE (256 aa).

Positions 78 and 99 each coordinate S-adenosyl-L-methionine.

This sequence belongs to the class I-like SAM-binding methyltransferase superfamily. MenG/UbiE family.

The catalysed reaction is a 2-demethylmenaquinol + S-adenosyl-L-methionine = a menaquinol + S-adenosyl-L-homocysteine + H(+). It catalyses the reaction a 2-methoxy-6-(all-trans-polyprenyl)benzene-1,4-diol + S-adenosyl-L-methionine = a 5-methoxy-2-methyl-3-(all-trans-polyprenyl)benzene-1,4-diol + S-adenosyl-L-homocysteine + H(+). Its pathway is quinol/quinone metabolism; menaquinone biosynthesis; menaquinol from 1,4-dihydroxy-2-naphthoate: step 2/2. It participates in cofactor biosynthesis; ubiquinone biosynthesis. Its function is as follows. Methyltransferase required for the conversion of demethylmenaquinol (DMKH2) to menaquinol (MKH2) and the conversion of 2-polyprenyl-6-methoxy-1,4-benzoquinol (DDMQH2) to 2-polyprenyl-3-methyl-6-methoxy-1,4-benzoquinol (DMQH2). In Geobacter sulfurreducens (strain ATCC 51573 / DSM 12127 / PCA), this protein is Ubiquinone/menaquinone biosynthesis C-methyltransferase UbiE.